A 229-amino-acid polypeptide reads, in one-letter code: Large ribosomal subunit protein uL1 (229 aa).

Belongs to the universal ribosomal protein uL1 family. As to quaternary structure, part of the 50S ribosomal subunit.

Binds directly to 23S rRNA. The L1 stalk is quite mobile in the ribosome, and is involved in E site tRNA release. Functionally, protein L1 is also a translational repressor protein, it controls the translation of the L11 operon by binding to its mRNA. This is Large ribosomal subunit protein uL1 from Staphylococcus aureus (strain MRSA252).